Here is a 200-residue protein sequence, read N- to C-terminus: Dephospho-CoA kinase (200 aa).

A DPCK domain is found at 3–200 (IIGLTGGIGS…LWQRFATQVE (198 aa)). 11-16 (GSGKST) serves as a coordination point for ATP.

The protein belongs to the CoaE family.

It is found in the cytoplasm. It carries out the reaction 3'-dephospho-CoA + ATP = ADP + CoA + H(+). It participates in cofactor biosynthesis; coenzyme A biosynthesis; CoA from (R)-pantothenate: step 5/5. Catalyzes the phosphorylation of the 3'-hydroxyl group of dephosphocoenzyme A to form coenzyme A. This chain is Dephospho-CoA kinase, found in Corynebacterium diphtheriae (strain ATCC 700971 / NCTC 13129 / Biotype gravis).